The chain runs to 296 residues: tRNA dimethylallyltransferase (296 aa).

Position 2–9 (2–9 (GPTASGKT)) interacts with ATP. 4–9 (TASGKT) contacts substrate. 3 interaction with substrate tRNA regions span residues 27-30 (DSAL), 151-155 (QRLSR), and 232-237 (RCVGYR).

Belongs to the IPP transferase family. As to quaternary structure, monomer. The cofactor is Mg(2+).

The catalysed reaction is adenosine(37) in tRNA + dimethylallyl diphosphate = N(6)-dimethylallyladenosine(37) in tRNA + diphosphate. Functionally, catalyzes the transfer of a dimethylallyl group onto the adenine at position 37 in tRNAs that read codons beginning with uridine, leading to the formation of N6-(dimethylallyl)adenosine (i(6)A). This is tRNA dimethylallyltransferase from Shewanella woodyi (strain ATCC 51908 / MS32).